A 155-amino-acid polypeptide reads, in one-letter code: Small ribosomal subunit protein bS6 (155 aa).

The disordered stretch occupies residues 94-155; it reads EEHETEPSAM…RDDNSDGGQE (62 aa). The span at 107–149 shows a compositional bias: basic and acidic residues; that stretch reads RGDRGDRGDRRGGDRFGDRDRGDRGDRGSSRFGDRERPRRDDN.

Belongs to the bacterial ribosomal protein bS6 family.

In terms of biological role, binds together with bS18 to 16S ribosomal RNA. This Parvibaculum lavamentivorans (strain DS-1 / DSM 13023 / NCIMB 13966) protein is Small ribosomal subunit protein bS6.